The following is a 565-amino-acid chain: Formate--tetrahydrofolate ligase (565 aa).

67 to 74 (TPLGEGKT) contributes to the ATP binding site.

Belongs to the formate--tetrahydrofolate ligase family.

The catalysed reaction is (6S)-5,6,7,8-tetrahydrofolate + formate + ATP = (6R)-10-formyltetrahydrofolate + ADP + phosphate. It participates in one-carbon metabolism; tetrahydrofolate interconversion. This chain is Formate--tetrahydrofolate ligase, found in Saccharopolyspora erythraea (strain ATCC 11635 / DSM 40517 / JCM 4748 / NBRC 13426 / NCIMB 8594 / NRRL 2338).